The primary structure comprises 631 residues: tRNA uridine 5-carboxymethylaminomethyl modification enzyme MnmG (631 aa).

FAD is bound at residue 15-20 (GAGHAG). The tract at residues 214–233 (YSKTEEEPGDKEPRHFSFTS) is disordered. Residue 276 to 290 (GPRYCPSIETKVVRF) coordinates NAD(+).

Belongs to the MnmG family. As to quaternary structure, homodimer. Heterotetramer of two MnmE and two MnmG subunits. Requires FAD as cofactor.

It is found in the cytoplasm. In terms of biological role, NAD-binding protein involved in the addition of a carboxymethylaminomethyl (cmnm) group at the wobble position (U34) of certain tRNAs, forming tRNA-cmnm(5)s(2)U34. This is tRNA uridine 5-carboxymethylaminomethyl modification enzyme MnmG from Lactobacillus delbrueckii subsp. bulgaricus (strain ATCC BAA-365 / Lb-18).